A 305-amino-acid chain; its full sequence is Methionyl-tRNA formyltransferase (305 aa).

111-114 (SLLP) is a (6S)-5,6,7,8-tetrahydrofolate binding site.

It belongs to the Fmt family.

The enzyme catalyses L-methionyl-tRNA(fMet) + (6R)-10-formyltetrahydrofolate = N-formyl-L-methionyl-tRNA(fMet) + (6S)-5,6,7,8-tetrahydrofolate + H(+). Its function is as follows. Attaches a formyl group to the free amino group of methionyl-tRNA(fMet). The formyl group appears to play a dual role in the initiator identity of N-formylmethionyl-tRNA by promoting its recognition by IF2 and preventing the misappropriation of this tRNA by the elongation apparatus. This is Methionyl-tRNA formyltransferase from Campylobacter jejuni subsp. jejuni serotype O:6 (strain 81116 / NCTC 11828).